The primary structure comprises 184 residues: Elongation factor P 1 (184 aa).

The protein belongs to the elongation factor P family.

It localises to the cytoplasm. It functions in the pathway protein biosynthesis; polypeptide chain elongation. Functionally, involved in peptide bond synthesis. Stimulates efficient translation and peptide-bond synthesis on native or reconstituted 70S ribosomes in vitro. Probably functions indirectly by altering the affinity of the ribosome for aminoacyl-tRNA, thus increasing their reactivity as acceptors for peptidyl transferase. In Protochlamydia amoebophila (strain UWE25), this protein is Elongation factor P 1 (efp1).